Reading from the N-terminus, the 284-residue chain is 2-dehydro-3-deoxyphosphooctonate aldolase (284 aa).

It belongs to the KdsA family.

It localises to the cytoplasm. It carries out the reaction D-arabinose 5-phosphate + phosphoenolpyruvate + H2O = 3-deoxy-alpha-D-manno-2-octulosonate-8-phosphate + phosphate. It participates in carbohydrate biosynthesis; 3-deoxy-D-manno-octulosonate biosynthesis; 3-deoxy-D-manno-octulosonate from D-ribulose 5-phosphate: step 2/3. The protein operates within bacterial outer membrane biogenesis; lipopolysaccharide biosynthesis. This chain is 2-dehydro-3-deoxyphosphooctonate aldolase, found in Enterobacter sp. (strain 638).